Consider the following 270-residue polypeptide: Urease accessory protein UreD (270 aa).

This sequence belongs to the UreD family. UreD, UreF and UreG form a complex that acts as a GTP-hydrolysis-dependent molecular chaperone, activating the urease apoprotein by helping to assemble the nickel containing metallocenter of UreC. The UreE protein probably delivers the nickel.

It localises to the cytoplasm. Required for maturation of urease via the functional incorporation of the urease nickel metallocenter. This chain is Urease accessory protein UreD, found in Microcystis aeruginosa (strain NIES-843 / IAM M-2473).